The following is a 313-amino-acid chain: Carbamate kinase 2 (313 aa).

It belongs to the carbamate kinase family.

It localises to the cytoplasm. The catalysed reaction is hydrogencarbonate + NH4(+) + ATP = carbamoyl phosphate + ADP + H2O + H(+). It participates in metabolic intermediate metabolism; carbamoyl phosphate degradation; CO(2) and NH(3) from carbamoyl phosphate: step 1/1. This Staphylococcus aureus (strain Mu50 / ATCC 700699) protein is Carbamate kinase 2 (arcC2).